Here is an 84-residue protein sequence, read N- to C-terminus: Acyl carrier protein homolog (84 aa).

The region spanning 4–79 (HEILLKIKEI…DLVLEVKNLL (76 aa)) is the Carrier domain. Ser-39 is modified (O-(pantetheine 4'-phosphoryl)serine).

In terms of processing, 4'-phosphopantetheine is transferred from CoA to a specific serine of the apo-ACP-like protein.

The protein operates within lipid metabolism; fatty acid biosynthesis. In terms of biological role, carrier of the growing fatty acid chain in fatty acid biosynthesis. The protein is Acyl carrier protein homolog of Mycoplasma genitalium (strain ATCC 33530 / DSM 19775 / NCTC 10195 / G37) (Mycoplasmoides genitalium).